The primary structure comprises 172 residues: C-phycocyanin beta chain (172 aa).

N4-methylasparagine is present on N72. (2R,3E)-phycocyanobilin-binding residues include C82 and C153.

Belongs to the phycobiliprotein family. Heterodimer of an alpha and a beta subunit, which further assembles into trimers and the trimers into hexamers. The basic functional unit of phycobiliproteins is a ring-shaped hexamer formed from two back-to-back trimers contacting via the alpha chain subunits. The trimers are composed of alpha/beta subunit heterodimers arranged around a three-fold axis of symmetry. The phycoerythrins also contain a gamma subunit which is located in the center of the hexamer. In terms of processing, contains two covalently linked bilin chromophores.

It localises to the plastid. It is found in the chloroplast thylakoid membrane. Its function is as follows. Light-harvesting photosynthetic bile pigment-protein from the phycobiliprotein complex (phycobilisome, PBS). Phycocyanin is the major phycobiliprotein in the PBS rod. The chain is C-phycocyanin beta chain (cpcB) from Pyropia haitanensis (Red seaweed).